The chain runs to 206 residues: Small ribosomal subunit protein uS4 (206 aa).

The region spanning 96–156 is the S4 RNA-binding domain; that stretch reads GRLDNVVYRM…EKSKKQARIK (61 aa).

It belongs to the universal ribosomal protein uS4 family. In terms of assembly, part of the 30S ribosomal subunit. Contacts protein S5. The interaction surface between S4 and S5 is involved in control of translational fidelity.

Functionally, one of the primary rRNA binding proteins, it binds directly to 16S rRNA where it nucleates assembly of the body of the 30S subunit. With S5 and S12 plays an important role in translational accuracy. This is Small ribosomal subunit protein uS4 from Histophilus somni (strain 129Pt) (Haemophilus somnus).